The sequence spans 355 residues: Anthranilate phosphoribosyltransferase (355 aa).

5-phospho-alpha-D-ribose 1-diphosphate contacts are provided by residues Gly-85, 88–89, Thr-93, 95–98, 113–121, and Ser-125; these read GD, NIST, and KHGNRAASS. Gly-85 contributes to the anthranilate binding site. Mg(2+) is bound at residue Ser-97. Asn-116 serves as a coordination point for anthranilate. An anthranilate-binding site is contributed by Arg-171. Mg(2+)-binding residues include Asp-229 and Glu-230.

It belongs to the anthranilate phosphoribosyltransferase family. In terms of assembly, homodimer. Mg(2+) is required as a cofactor.

It carries out the reaction N-(5-phospho-beta-D-ribosyl)anthranilate + diphosphate = 5-phospho-alpha-D-ribose 1-diphosphate + anthranilate. It functions in the pathway amino-acid biosynthesis; L-tryptophan biosynthesis; L-tryptophan from chorismate: step 2/5. Functionally, catalyzes the transfer of the phosphoribosyl group of 5-phosphorylribose-1-pyrophosphate (PRPP) to anthranilate to yield N-(5'-phosphoribosyl)-anthranilate (PRA). This chain is Anthranilate phosphoribosyltransferase, found in Acidothermus cellulolyticus (strain ATCC 43068 / DSM 8971 / 11B).